Here is a 318-residue protein sequence, read N- to C-terminus: Protoheme IX farnesyltransferase (318 aa).

9 consecutive transmembrane segments (helical) span residues 33–53 (VMSLVVFTALVGLVAAPVSVH), 54–74 (PFIGFCAILFIAIGGGASGAL), 102–122 (GEALALGLGLSGLSVMMLALA), 125–145 (VLAGAFLAFTIFFYVVVYTMW), 154–174 (IVIGGAAGAFPPVIGWIAATG), 181–201 (WLMFALTFMWTPPHFWALALF), 225–245 (VHILIYTILLALLALGTAFSN), 246–266 (IGGPIYLAVALVLNALFLLGA), and 288–308 (FFKLSLLYLFLHFGAILAEAL).

The protein belongs to the UbiA prenyltransferase family. Protoheme IX farnesyltransferase subfamily. In terms of assembly, interacts with CtaA.

The protein localises to the cell inner membrane. It carries out the reaction heme b + (2E,6E)-farnesyl diphosphate + H2O = Fe(II)-heme o + diphosphate. It participates in porphyrin-containing compound metabolism; heme O biosynthesis; heme O from protoheme: step 1/1. Converts heme B (protoheme IX) to heme O by substitution of the vinyl group on carbon 2 of heme B porphyrin ring with a hydroxyethyl farnesyl side group. This Ruegeria pomeroyi (strain ATCC 700808 / DSM 15171 / DSS-3) (Silicibacter pomeroyi) protein is Protoheme IX farnesyltransferase.